The sequence spans 715 residues: Coiled-coil domain-containing protein 170 (715 aa).

Coiled coils occupy residues valine 30 to glutamine 286, glutamate 360 to glycine 418, and glutamate 478 to valine 656. Residues methionine 355 to glutamate 591 form a required for binding to microtubules and Golgi apparatus location region.

In terms of assembly, binds Golgi-associated microtubules.

The protein resides in the golgi apparatus. Its function is as follows. Plays a role in Golgi-associated microtubules organization and stabilization. The sequence is that of Coiled-coil domain-containing protein 170 from Homo sapiens (Human).